The following is a 2138-amino-acid chain: Conidial yellow pigment biosynthesis polyketide synthase melA (2138 aa).

Residues 8-244 are N-terminal acylcarrier protein transacylase domain (SAT); the sequence is YLFGDQTADF…TRVPIHGPYH (237 aa). Positions 373 to 804 constitute a Ketosynthase family 3 (KS3) domain; sequence QSKIAIIGLS…GGNTALMVED (432 aa). Active-site for beta-ketoacyl synthase activity residues include cysteine 545, histidine 680, and histidine 722. The tract at residues 910-1229 is malonyl-CoA:ACP transacylase (MAT) domain; it reads FVFTGQGAQY…VSALYMAGIE (320 aa). Serine 999 (for acyl/malonyl transferase activity) is an active-site residue. The interval 1288-1601 is product template (PT) domain; the sequence is SSAAQRVLET…RKILDMALPP (314 aa). Positions 1292-1423 are N-terminal hotdog fold; sequence QRVLETSGDN…CNIKFFDPSP (132 aa). Positions 1292 to 1596 constitute a PKS/mFAS DH domain; the sequence is QRVLETSGDN…FQGLARKILD (305 aa). The active-site Proton acceptor; for dehydratase activity is histidine 1324. The C-terminal hotdog fold stretch occupies residues 1451–1596; sequence AHRMKRGMVY…FQGLARKILD (146 aa). Aspartate 1509 acts as the Proton donor; for dehydratase activity in catalysis. The Carrier 1 domain occupies 1640 to 1714; sequence PSMATRALAI…DFKHLLAQMG (75 aa). Serine 1674 bears the O-(pantetheine 4'-phosphoryl)serine mark. The segment at 1712–1758 is disordered; it reads QMGPGESSDGSSSEGDMSSAASSTDLSSPNTSGLPTPANEKSMTHGL. A compositionally biased stretch (low complexity) spans 1713 to 1739; sequence MGPGESSDGSSSEGDMSSAASSTDLSS. The segment covering 1740–1758 has biased composition (polar residues); sequence PNTSGLPTPANEKSMTHGL. Residues 1759 to 1836 enclose the Carrier 2 domain; the sequence is QGQNDSMRQI…DIETTLDLKP (78 aa). The residue at position 1796 (serine 1796) is an O-(pantetheine 4'-phosphoryl)serine. The tract at residues 1863–2135 is claisen cyclase domain; it reads TQHPPATSIL…ELARFIANSM (273 aa). The active-site For Claisen cyclase activity is serine 1953.

The catalysed reaction is 6 malonyl-CoA + acetyl-CoA + 6 H(+) = naphtopyrone YWA1 + 6 CO2 + 7 CoA + H2O. It functions in the pathway pigment biosynthesis. It participates in polyketide biosynthesis; heptaketide naphthopyrone YWA1 biosynthesis. Functionally, non-reducing polyketide synthase involved in the biosynthesis of a yellow conidial pigment. Probably forms the heptaketide naphthopyrene YWA1 via condensation of acetate units. The protein is Conidial yellow pigment biosynthesis polyketide synthase melA of Penicillium expansum (Blue mold rot fungus).